The chain runs to 390 residues: MAFDLAARLAERRAADLYRQRPLLESPQGPEVVVDGQRLLAFCSNDYLGLANHPEVITAWQAGAERWGVGGGASHLVVGHSTPHHQVEEALAELTGRPRALLFSTGYMANLGAITALVGQGDTVLQDRLNHASLLDGGLLSGARFNRYLHNDPASLASRLDKAVGNTLVVTDGVFSMDGDLADLPALADVARARGAWLMVDDAHGLGTLGTQGGGIVEHFGLGVDDVPVLIGTLGKACGTAGAFVAGSEALIEALVQFARPYIYTTSQPPALACATLKSLELLRRETWRREHLAALIRQFREGAQQMGLQLMDSPTPIQPIVIGDSAQALRLSRLLRERGLLVTAIRPPTVPAGSARLRVTLSAAHSEAQVQLLLNALAECYPQLENADA.

Arginine 19 is a binding site for substrate. Pyridoxal 5'-phosphate is bound at residue 106–107 (GY). Residue histidine 131 participates in substrate binding. Residues serine 176, histidine 204, and threonine 233 each contribute to the pyridoxal 5'-phosphate site. Lysine 236 is subject to N6-(pyridoxal phosphate)lysine. Threonine 350 serves as a coordination point for substrate.

This sequence belongs to the class-II pyridoxal-phosphate-dependent aminotransferase family. BioF subfamily. Homodimer. Pyridoxal 5'-phosphate is required as a cofactor.

The catalysed reaction is 6-carboxyhexanoyl-[ACP] + L-alanine + H(+) = (8S)-8-amino-7-oxononanoate + holo-[ACP] + CO2. Its pathway is cofactor biosynthesis; biotin biosynthesis. Its function is as follows. Catalyzes the decarboxylative condensation of pimeloyl-[acyl-carrier protein] and L-alanine to produce 8-amino-7-oxononanoate (AON), [acyl-carrier protein], and carbon dioxide. This Pseudomonas putida (strain ATCC 700007 / DSM 6899 / JCM 31910 / BCRC 17059 / LMG 24140 / F1) protein is 8-amino-7-oxononanoate synthase.